A 65-amino-acid chain; its full sequence is Disintegrin CC5 (65 aa).

The Disintegrin domain occupies 1–65 (MNSAHPCCDP…SDCPRNRYKS (65 aa)). Cystine bridges form between C7–C30, C21–C27, C26–C51, and C39–C58. Positions 43 to 45 (RGD) match the Cell attachment site motif.

It belongs to the disintegrin family. Dimeric disintegrin subfamily. As to quaternary structure, homodimer; disulfide-linked. As to expression, expressed by the venom gland.

It localises to the secreted. Its function is as follows. Binds and inhibits integrins alpha-IIb/beta-3 (ITGA2B/ITGB3), alpha-V/beta-3 (ITGAV/ITGB3) and alpha-5/beta-1 (ITGA5/ITGB1). The sequence is that of Disintegrin CC5 from Cerastes cerastes (Horned desert viper).